A 123-amino-acid polypeptide reads, in one-letter code: KxDL motif-containing protein LO9-177 (123 aa).

Positions 78–81 match the KxDL motif; the sequence is KDDL.

It belongs to the KXD1 family. As to quaternary structure, homodimer. Component of a nuclear cell elongation controlling complex made of ILI5/BUL1, LO9-177 and BC1. Binds directly to ILI5/BUL1, ILI4/BU1, BUL2 and BUL3. Binds to BC1 in the nucleus. Interacts with BCL1.

It localises to the nucleus. The protein resides in the cytoplasm. In terms of biological role, contributes, together with ILI5/BUL1 and BC1, to the promotion of leaf inclination and grain size by modulating cell elongation. This chain is KxDL motif-containing protein LO9-177, found in Oryza sativa subsp. indica (Rice).